We begin with the raw amino-acid sequence, 142 residues long: Large ribosomal subunit protein uL16 (142 aa).

The protein belongs to the universal ribosomal protein uL16 family. In terms of assembly, part of the 50S ribosomal subunit.

In terms of biological role, binds 23S rRNA and is also seen to make contacts with the A and possibly P site tRNAs. The chain is Large ribosomal subunit protein uL16 from Thermotoga neapolitana (strain ATCC 49049 / DSM 4359 / NBRC 107923 / NS-E).